Here is a 425-residue protein sequence, read N- to C-terminus: Serine--tRNA ligase (425 aa).

Disordered stretches follow at residues 43–69 (QRSS…SDPK) and 108–134 (LPNL…WGKP). Residues 117-134 (PEGRDENDNQERHRWGKP) show a composition bias toward basic and acidic residues. 233 to 235 (TAE) lines the L-serine pocket. Residue 264 to 266 (RRE) coordinates ATP. Glutamate 287 contacts L-serine. 351–354 (EISS) is an ATP binding site. Serine 385 provides a ligand contact to L-serine.

It belongs to the class-II aminoacyl-tRNA synthetase family. Type-1 seryl-tRNA synthetase subfamily. In terms of assembly, homodimer. The tRNA molecule binds across the dimer.

It is found in the cytoplasm. The enzyme catalyses tRNA(Ser) + L-serine + ATP = L-seryl-tRNA(Ser) + AMP + diphosphate + H(+). It carries out the reaction tRNA(Sec) + L-serine + ATP = L-seryl-tRNA(Sec) + AMP + diphosphate + H(+). It participates in aminoacyl-tRNA biosynthesis; selenocysteinyl-tRNA(Sec) biosynthesis; L-seryl-tRNA(Sec) from L-serine and tRNA(Sec): step 1/1. In terms of biological role, catalyzes the attachment of serine to tRNA(Ser). Is also able to aminoacylate tRNA(Sec) with serine, to form the misacylated tRNA L-seryl-tRNA(Sec), which will be further converted into selenocysteinyl-tRNA(Sec). This chain is Serine--tRNA ligase, found in Prochlorococcus marinus (strain MIT 9313).